The following is a 213-amino-acid chain: Large ribosomal subunit protein mL67 (213 aa).

Belongs to the mitochondrion-specific ribosomal protein mL67 family.

Its subcellular location is the nucleus. The protein localises to the mitochondrion. Functionally, transcription factor involved in regulation of RNA polymerase II-dependent transcription. Also involved in regulation of mitochondrial DNA recombination, maintenance and repair, and generation of homoplasmic cells. The polypeptide is Large ribosomal subunit protein mL67 (MHR1) (Eremothecium gossypii (strain ATCC 10895 / CBS 109.51 / FGSC 9923 / NRRL Y-1056) (Yeast)).